Here is a 299-residue protein sequence, read N- to C-terminus: tRNA dimethylallyltransferase (299 aa).

Position 11–18 (11–18) interacts with ATP; sequence GPTGSGKS. 13 to 18 is a binding site for substrate; the sequence is TGSGKS.

Belongs to the IPP transferase family. As to quaternary structure, monomer. The cofactor is Mg(2+).

It carries out the reaction adenosine(37) in tRNA + dimethylallyl diphosphate = N(6)-dimethylallyladenosine(37) in tRNA + diphosphate. Functionally, catalyzes the transfer of a dimethylallyl group onto the adenine at position 37 in tRNAs that read codons beginning with uridine, leading to the formation of N6-(dimethylallyl)adenosine (i(6)A). This is tRNA dimethylallyltransferase from Pseudarthrobacter chlorophenolicus (strain ATCC 700700 / DSM 12829 / CIP 107037 / JCM 12360 / KCTC 9906 / NCIMB 13794 / A6) (Arthrobacter chlorophenolicus).